Reading from the N-terminus, the 667-residue chain is Putative L-type lectin-domain containing receptor kinase I.4 (667 aa).

Positions 1–21 (MDCRLHLVLFFSCVCLICLSG) are cleaved as a signal peptide. The Extracellular segment spans residues 22–294 (QQETGFVYNG…PREEKKKLHP (273 aa)). Residues 24–257 (ETGFVYNGFH…NQYILGWSFS (234 aa)) form a legume-lectin like region. Residues asparagine 55, asparagine 110, asparagine 124, asparagine 128, asparagine 181, asparagine 204, and asparagine 225 are each glycosylated (N-linked (GlcNAc...) asparagine). The helical transmembrane segment at 295-315 (LLIGLVILLVIPVLMVLGGVY) threads the bilayer. The Cytoplasmic segment spans residues 316–667 (WYRRKKYAEV…THSILEGYGR (352 aa)). Positions 350–625 (FVKDALVGKG…QYLSQKQPLP (276 aa)) constitute a Protein kinase domain. ATP is bound by residues 356–364 (VGKGGFGKV) and lysine 378. Catalysis depends on aspartate 474, which acts as the Proton acceptor.

The protein in the C-terminal section; belongs to the protein kinase superfamily. Ser/Thr protein kinase family. In the N-terminal section; belongs to the leguminous lectin family.

Its subcellular location is the cell membrane. The enzyme catalyses L-seryl-[protein] + ATP = O-phospho-L-seryl-[protein] + ADP + H(+). It catalyses the reaction L-threonyl-[protein] + ATP = O-phospho-L-threonyl-[protein] + ADP + H(+). This is Putative L-type lectin-domain containing receptor kinase I.4 (LECRK14) from Arabidopsis thaliana (Mouse-ear cress).